We begin with the raw amino-acid sequence, 320 residues long: MSSCNFTHATFLLIGIPGLEEAHFWFGFPLLSMYAVALFGNCIVVFIVRTERSLHAPMYLFLCMLAAIDLALSTSTMPKILALFWFDSREITFDACLAQMFFIHTLSAIESTILLAMAFDRYVAICHPLRHAAVLNNTVTVQIGMVALVRGSLFFFPLPLLIKRLAFCHSNVLSHSYCVHQDVMKLAYTDTLPNVVYGLTAILLVMGVDVMFISLSYFLIIRTVLQLPSKSERAKAFGTCVSHISVVLAFYVPLIGLSVVHRFGNSLDPIVHVLMGDVYLLLPPVINPIIYGAKTKQIRTRVLAMFKISCDKDIEAGGNT.

The Extracellular segment spans residues 1–27; that stretch reads MSSCNFTHATFLLIGIPGLEEAHFWFG. N-linked (GlcNAc...) asparagine glycosylation is present at Asn-5. Residues 28 to 48 traverse the membrane as a helical segment; that stretch reads FPLLSMYAVALFGNCIVVFIV. The Cytoplasmic portion of the chain corresponds to 49–53; the sequence is RTERS. The chain crosses the membrane as a helical span at residues 54–74; it reads LHAPMYLFLCMLAAIDLALST. The Extracellular portion of the chain corresponds to 75-98; sequence STMPKILALFWFDSREITFDACLA. The cysteines at positions 96 and 178 are disulfide-linked. The helical transmembrane segment at 99–119 threads the bilayer; sequence QMFFIHTLSAIESTILLAMAF. Residues 120 to 141 lie on the Cytoplasmic side of the membrane; that stretch reads DRYVAICHPLRHAAVLNNTVTV. A helical transmembrane segment spans residues 142–162; it reads QIGMVALVRGSLFFFPLPLLI. Topologically, residues 163–200 are extracellular; the sequence is KRLAFCHSNVLSHSYCVHQDVMKLAYTDTLPNVVYGLT. A helical transmembrane segment spans residues 201 to 221; it reads AILLVMGVDVMFISLSYFLII. Over 222–239 the chain is Cytoplasmic; sequence RTVLQLPSKSERAKAFGT. The chain crosses the membrane as a helical span at residues 240–260; that stretch reads CVSHISVVLAFYVPLIGLSVV. The Extracellular portion of the chain corresponds to 261 to 269; it reads HRFGNSLDP. Residues 270–290 form a helical membrane-spanning segment; the sequence is IVHVLMGDVYLLLPPVINPII. Over 291–320 the chain is Cytoplasmic; it reads YGAKTKQIRTRVLAMFKISCDKDIEAGGNT.

It belongs to the G-protein coupled receptor 1 family. In brain, expressed in medulla oblongata by cells close to the fourth ventricle, in the area postrema, the nucleus tractus solitarius. Expressed in olfactory epithelium and vomeronasal organ. Expressed in kidney by large renal vessels, renal afferent arterioles, and extrarenal vascular beds. In small resistance vessels the expression is restricted to cells of the juxtaglomerular afferent arteriole, which mediate renin secretion. Also detected in small blood vessels in a variety of tissues including heart, diaphragm, skeletal muscle, and skin. In the heart, esophagus, and stomach it is detected in axons of autonomic neurons and neurons of the enteric plexus. Also detected in colon and liver. Expressed in the glomus cells of the carotid body.

Its subcellular location is the cell membrane. The protein resides in the early endosome membrane. Olfactory receptor. The activity of this receptor is probably mediated by G-proteins which induce elevation of intracellular Ca(2+), cAMP and activation of phosphorylation of the protein kinases PKA and MAPK3/MAPK1. Activation of OR51E2 may affect melanocyte proliferation, differentiation, and melanogenesis and may increase proliferation and migration of primary retinal pigment epithelial (RPE) cells. Activated by the short chain fatty acids (SCFA), acetate and propionate. In response to SCFA, may positively regulate renin secretion and increase blood pressure. May also be activated by steroid hormones and regulate cell proliferation. Activated by L-lactate in glomus cells. The sequence is that of Olfactory receptor 51E2 (Or51e2) from Mus musculus (Mouse).